The chain runs to 175 residues: Adenine phosphoribosyltransferase (175 aa).

Belongs to the purine/pyrimidine phosphoribosyltransferase family. Homodimer.

It localises to the cytoplasm. It carries out the reaction AMP + diphosphate = 5-phospho-alpha-D-ribose 1-diphosphate + adenine. It participates in purine metabolism; AMP biosynthesis via salvage pathway; AMP from adenine: step 1/1. In terms of biological role, catalyzes a salvage reaction resulting in the formation of AMP, that is energically less costly than de novo synthesis. The chain is Adenine phosphoribosyltransferase from Lactobacillus delbrueckii subsp. bulgaricus (strain ATCC 11842 / DSM 20081 / BCRC 10696 / JCM 1002 / NBRC 13953 / NCIMB 11778 / NCTC 12712 / WDCM 00102 / Lb 14).